The following is a 338-amino-acid chain: DNA-directed RNA polymerase subunit alpha (338 aa).

The interval methionine 1–glutamate 234 is alpha N-terminal domain (alpha-NTD). Residues phenylalanine 250 to tyrosine 338 form an alpha C-terminal domain (alpha-CTD) region.

Belongs to the RNA polymerase alpha chain family. As to quaternary structure, homodimer. The RNAP catalytic core consists of 2 alpha, 1 beta, 1 beta' and 1 omega subunit. When a sigma factor is associated with the core the holoenzyme is formed, which can initiate transcription.

It carries out the reaction RNA(n) + a ribonucleoside 5'-triphosphate = RNA(n+1) + diphosphate. Its function is as follows. DNA-dependent RNA polymerase catalyzes the transcription of DNA into RNA using the four ribonucleoside triphosphates as substrates. The chain is DNA-directed RNA polymerase subunit alpha from Paramagnetospirillum magneticum (strain ATCC 700264 / AMB-1) (Magnetospirillum magneticum).